The primary structure comprises 208 residues: Thymidylate kinase (208 aa).

Position 12-19 (12-19 (GVDGAGKS)) interacts with ATP.

Belongs to the thymidylate kinase family.

It catalyses the reaction dTMP + ATP = dTDP + ADP. In terms of biological role, phosphorylation of dTMP to form dTDP in both de novo and salvage pathways of dTTP synthesis. This is Thymidylate kinase from Bordetella bronchiseptica (strain ATCC BAA-588 / NCTC 13252 / RB50) (Alcaligenes bronchisepticus).